A 550-amino-acid chain; its full sequence is Luciferin 4-monooxygenase (550 aa).

Residues 548 to 550 (SKL) carry the Microbody targeting signal motif.

The protein belongs to the ATP-dependent AMP-binding enzyme family. Mg(2+) is required as a cofactor.

It localises to the peroxisome. It carries out the reaction firefly D-luciferin + ATP + O2 = firefly oxyluciferin + hnu + AMP + CO2 + diphosphate. Its function is as follows. Produces green light with a wavelength of 562 nm. The protein is Luciferin 4-monooxygenase of Photinus pyralis (Common eastern firefly).